Consider the following 71-residue polypeptide: Natterin-P (71 aa).

A signal peptide spans 1–18 (MKLLVLLVTLLVLSWTSA). The propeptide occupies 19 to 45 (EDLGDQEILENNEDNNHESELGEPAAQ). Acidic residues predominate over residues 22–31 (GDQEILENNE). A disordered region spans residues 22–54 (GDQEILENNEDNNHESELGEPAAQHTDDETSQL). A disulfide bridge connects residues C62 and C71.

Belongs to the natterin family. In terms of tissue distribution, expressed by the venom gland.

The protein resides in the secreted. Inhibited by tissue-kallikrein inhibitor TKI and trasylol. Plasma kallikrein inhibitor PKSI527 and classical inhibitors of serine-, metallo-, thiol- or aspartate-peptidases evokes a minor inhibition of the peptide digestion. Shows nociceptive, edema-inducing and kininogenase activity with release of kallidin from low molecular weight kininogen. The cleavage occurs at Met-Lys bonds. The polypeptide is Natterin-P (Thalassophryne nattereri (Copper Joe toadfish)).